Here is a 363-residue protein sequence, read N- to C-terminus: Peptide chain release factor 1 (363 aa).

The residue at position 237 (Q237) is an N5-methylglutamine. The segment at 281–302 is disordered; that stretch reads QQAEDEKSHAEEQTIRRSLVAS. Basic and acidic residues predominate over residues 282–295; the sequence is QAEDEKSHAEEQTI.

Belongs to the prokaryotic/mitochondrial release factor family. In terms of processing, methylated by PrmC. Methylation increases the termination efficiency of RF1.

Its subcellular location is the cytoplasm. Peptide chain release factor 1 directs the termination of translation in response to the peptide chain termination codons UAG and UAA. This Psychromonas ingrahamii (strain DSM 17664 / CCUG 51855 / 37) protein is Peptide chain release factor 1.